We begin with the raw amino-acid sequence, 255 residues long: Hydroxyacylglutathione hydrolase (255 aa).

Zn(2+)-binding residues include His56, His58, Asp60, His61, His114, Asp133, and His171.

Belongs to the metallo-beta-lactamase superfamily. Glyoxalase II family. In terms of assembly, monomer. Zn(2+) is required as a cofactor.

The enzyme catalyses an S-(2-hydroxyacyl)glutathione + H2O = a 2-hydroxy carboxylate + glutathione + H(+). Its pathway is secondary metabolite metabolism; methylglyoxal degradation; (R)-lactate from methylglyoxal: step 2/2. Functionally, thiolesterase that catalyzes the hydrolysis of S-D-lactoyl-glutathione to form glutathione and D-lactic acid. In Fuscovulum blasticum (Rhodobacter blasticus), this protein is Hydroxyacylglutathione hydrolase.